The following is a 352-amino-acid chain: NADH-ubiquinone oxidoreductase chain 2 (352 aa).

12 helical membrane-spanning segments follow: residues 4-24 (IVSTFLFVTVVSGTIIVVSSE), 26-46 (WFIIWVGLELSTLALVPILCS), 67-87 (AALLLNGALGQAWLTGSWSIL), 96-116 (ICLSIALAFKIGLAPVHFWFP), 124-144 (FFQGLIIATWQKIAPLILMFY), 148-168 (LGFSYLLITPSLISVLIGGWG), 177-197 (KILAFSSIGNMGWLVITSAYS), 198-218 (FNAAIIMLVIYLIINTSLFLL), 241-261 (VALVLLVMLSLGGLPPLTGFI), 264-284 (FTSLYFLVANNFIILSSIMII), 290-310 (YFFYLRISFNTSLFLFPQHII), and 332-352 (SVSTVLSTLAIPLTLPLYIIT).

Belongs to the complex I subunit 2 family.

It localises to the mitochondrion inner membrane. It catalyses the reaction a ubiquinone + NADH + 5 H(+)(in) = a ubiquinol + NAD(+) + 4 H(+)(out). Core subunit of the mitochondrial membrane respiratory chain NADH dehydrogenase (Complex I) that is believed to belong to the minimal assembly required for catalysis. Complex I functions in the transfer of electrons from NADH to the respiratory chain. The immediate electron acceptor for the enzyme is believed to be ubiquinone. This Strongylocentrotus purpuratus (Purple sea urchin) protein is NADH-ubiquinone oxidoreductase chain 2 (ND2).